Reading from the N-terminus, the 453-residue chain is MTTDTIVAQATAPGRGGVGIVRVSGPAAEQVAEIVLGKLPRVRYAEYLPFRDEQGQPLDQGIALLFKAPNSFTGEDVLELQGHGGPVIMDMLVRRILQIKGLRPARPGEFSERAFMNDKLDLAQAEAIADLIEASSEQAARSAMHSLQGQFSGKIQQLVESLTRLRIYVEAAIDFPDEEIDFLSDGKVAGDLYAIMAELDDVRGEAKQGALLREGMKVVIAGRPNAGKSSLLNALAGRESAIVTEIAGTTRDVLREHIHLDGMPLHIIDTAGLRDTQDKVEQIGIERAWAEIEQADRVLFMVDGTTTAAVDPREIWPEFVDRLPKKIGLTVVRNKADLTGEDLAPSQELGHAVYRISAKTELGLSALREHLKACMGFQGNTEGGFMARRRHLDALERAAERLLVAKEQLEVFVAGELVAEELRLAQESLSEITGEFSSDDLLGRIFSSFCIGK.

R22, E79, and K119 together coordinate (6S)-5-formyl-5,6,7,8-tetrahydrofolate. The region spanning 215–376 is the TrmE-type G domain; that stretch reads GMKVVIAGRP…LREHLKACMG (162 aa). Position 225 (N225) interacts with K(+). Residues 225–230, 244–250, 269–272, and 334–337 each bind GTP; these read NAGKSS, TEIAGTT, DTAG, and NKAD. S229 contributes to the Mg(2+) binding site. Positions 244, 246, and 249 each coordinate K(+). T250 provides a ligand contact to Mg(2+). Position 453 (K453) interacts with (6S)-5-formyl-5,6,7,8-tetrahydrofolate.

The protein belongs to the TRAFAC class TrmE-Era-EngA-EngB-Septin-like GTPase superfamily. TrmE GTPase family. In terms of assembly, homodimer. Heterotetramer of two MnmE and two MnmG subunits. Requires K(+) as cofactor.

Its subcellular location is the cytoplasm. In terms of biological role, exhibits a very high intrinsic GTPase hydrolysis rate. Involved in the addition of a carboxymethylaminomethyl (cmnm) group at the wobble position (U34) of certain tRNAs, forming tRNA-cmnm(5)s(2)U34. The sequence is that of tRNA modification GTPase MnmE from Aeromonas hydrophila subsp. hydrophila (strain ATCC 7966 / DSM 30187 / BCRC 13018 / CCUG 14551 / JCM 1027 / KCTC 2358 / NCIMB 9240 / NCTC 8049).